The primary structure comprises 630 residues: Adagio-like protein 3 (630 aa).

Residues Glu-54–Glu-126 enclose the PAS domain. Cys-102 is subject to S-4a-FMN cysteine. The region spanning Tyr-220 to Cys-268 is the F-box domain. 5 Kelch repeats span residues Ser-380 to Asp-430, Ser-432 to Gly-483, Thr-485 to His-537, Gly-545 to Gly-597, and Thr-599 to Asp-629.

This sequence belongs to the ADAGIO family. In terms of processing, FMN binds covalently to cysteine after exposure to blue light and is reversed in the dark.

The protein resides in the nucleus. Its pathway is protein modification; protein ubiquitination. Component of an E3 ubiquitin ligase complex that plays a central role in blue light-dependent circadian cycles. Acts as a blue light photoreceptor, due to the presence of FMN, that mediates light-regulated protein degradation of critical clock components by targeting them to the proteasome complex. The SCF(ADO3) E3 ubiquitin ligase complex is involved in the regulation of circadian clock-dependent processes including transition to flowering time, hypocotyl elongation, cotyledons and leaf movement rhythms. The chain is Adagio-like protein 3 from Oryza sativa subsp. japonica (Rice).